We begin with the raw amino-acid sequence, 553 residues long: Chaperonin GroEL (553 aa).

ATP is bound by residues 30–33 (TLGP), Lys-51, 87–91 (DGTTT), Gly-416, and Asp-496.

This sequence belongs to the chaperonin (HSP60) family. As to quaternary structure, forms a cylinder of 14 subunits composed of two heptameric rings stacked back-to-back. Interacts with the co-chaperonin GroES.

It localises to the cytoplasm. It carries out the reaction ATP + H2O + a folded polypeptide = ADP + phosphate + an unfolded polypeptide.. Functionally, together with its co-chaperonin GroES, plays an essential role in assisting protein folding. The GroEL-GroES system forms a nano-cage that allows encapsulation of the non-native substrate proteins and provides a physical environment optimized to promote and accelerate protein folding. This Alkalilimnicola ehrlichii (strain ATCC BAA-1101 / DSM 17681 / MLHE-1) protein is Chaperonin GroEL.